Consider the following 136-residue polypeptide: Congerin-2 (136 aa).

Ser2 carries the N-acetylserine modification. Residues Arg4 to Glu136 form the Galectin domain. Trp70 to Ser76 is an a beta-D-galactoside binding site.

In terms of assembly, homodimer.

Functionally, this protein binds beta-galactoside. Its physiological function is not yet known. This is Congerin-2 from Conger myriaster (Conger eel).